The following is a 353-amino-acid chain: Putative transport protein YrrI (353 aa).

Transmembrane regions (helical) follow at residues 8 to 28 (LLLW…FFML), 37 to 57 (LVIK…YLLL), 77 to 97 (IYVL…PVLI), 165 to 185 (FLIA…IELM), 220 to 240 (LLVC…FGLP), 243 to 263 (LILG…PFIG), 269 to 289 (LIAM…VFIL), and 311 to 331 (VVIM…GMIL).

Belongs to the autoinducer-2 exporter (AI-2E) (TC 2.A.86) family.

The protein localises to the cell membrane. The polypeptide is Putative transport protein YrrI (yrrI) (Bacillus subtilis (strain 168)).